Here is a 239-residue protein sequence, read N- to C-terminus: Protein virB1 (239 aa).

A signal peptide spans 1 to 28; sequence MFKRSGSLSLALMSSFCSSSLATPLSSA. A disordered region spans residues 202 to 232; that stretch reads SYQRRSQEDGVGGSIAPQPPDQDNGKSADDN.

It belongs to the virb1 family.

Its function is as follows. VirB proteins are suggested to act at the bacterial surface and there play an important role in directing T-DNA transfer to plant cells. In Agrobacterium tumefaciens (strain 15955), this protein is Protein virB1 (virB1).